Reading from the N-terminus, the 532-residue chain is Pentatricopeptide repeat-containing protein At5g66500, mitochondrial (532 aa).

The N-terminal 33 residues, methionine 1–phenylalanine 33, are a transit peptide targeting the mitochondrion. 12 PPR repeats span residues aspartate 48–leucine 82, serine 83–threonine 117, glycine 118–lysine 148, aspartate 149–isoleucine 183, serine 184–leucine 218, threonine 223–histidine 248, aspartate 250–asparagine 280, valine 281–serine 314, aspartate 315–lysine 345, serine 346–valine 380, asparagine 383–lysine 413, and glycine 419–serine 453. The segment at isoleucine 458 to isoleucine 532 is type E motif; degenerate.

This sequence belongs to the PPR family. PCMP-E subfamily.

The protein localises to the mitochondrion. The chain is Pentatricopeptide repeat-containing protein At5g66500, mitochondrial (PCMP-E38) from Arabidopsis thaliana (Mouse-ear cress).